A 138-amino-acid chain; its full sequence is Centromere protein S (138 aa).

Residue M1 is modified to N-acetylmethionine. Residues A112–N138 are disordered.

Belongs to the TAF9 family. CENP-S/MHF1 subfamily. As to quaternary structure, heterodimer with CENPX, sometimes called MHF; this interaction stabilizes both partners. MHF heterodimers can assemble to form tetrameric structures. MHF also coassemble with CENPT-CENPW heterodimers at centromeres to form the tetrameric CENP-T-W-S-X complex. Forms a discrete complex with FANCM and CENPX, called FANCM-MHF; this interaction, probably mediated by direct binding between CENPS and FANCM, leads to synergistic activation of double-stranded DNA binding and strongly stimulates FANCM-mediated DNA remodeling. Recruited by FANCM to the Fanconi anemia (FA) core complex, which consists of CENPS, CENPX, FANCA, FANCB, FANCC, FANCE, FANCF, FANCG, FANCL, FANCM, FAAP24 and FAAP100. The FA core complex associates with Bloom syndrome (BLM) complex, which consists of at least BLM, DNA topoisomerase 3-alpha (TOP3A), RMI1/BLAP75, RPA1/RPA70 and RPA2/RPA32. The super complex between FA and BLM is called BRAFT. Component of the CENPA-CAD complex, composed of CENPI, CENPK, CENPL, CENPO, CENPP, CENPQ, CENPR and CENPS. The CENPA-CAD complex is probably recruited on centromeres by the CENPA-NAC complex, at least composed of CENPA, CENPC, CENPH, CENPM, CENPN, CENPT and CENPU.

Its subcellular location is the nucleus. The protein localises to the chromosome. It localises to the centromere. It is found in the kinetochore. Functionally, DNA-binding component of the Fanconi anemia (FA) core complex. Required for the normal activation of the FA pathway, leading to monoubiquitination of the FANCI-FANCD2 complex in response to DNA damage, cellular resistance to DNA cross-linking drugs, and prevention of chromosomal breakage. In complex with CENPX (MHF heterodimer), crucial cofactor for FANCM in both binding and ATP-dependent remodeling of DNA. Stabilizes FANCM. In complex with CENPX and FANCM (but not other FANC proteins), rapidly recruited to blocked forks and promotes gene conversion at blocked replication forks. In complex with CENPT, CENPW and CENPX (CENP-T-W-S-X heterotetramer), involved in the formation of a functional kinetochore outer plate, which is essential for kinetochore-microtubule attachment and faithful mitotic progression. As a component of MHF and CENP-T-W-S-X complexes, binds DNA and bends it to form a nucleosome-like structure. DNA-binding function is fulfilled in the presence of CENPX, with the following preference for DNA substates: Holliday junction &gt; double-stranded &gt; splay arm &gt; single-stranded. Does not bind DNA on its own. In Bos taurus (Bovine), this protein is Centromere protein S (CENPS).